Reading from the N-terminus, the 283-residue chain is Phosphatidylserine decarboxylase proenzyme (283 aa).

Active-site charge relay system; for autoendoproteolytic cleavage activity residues include D88, H145, and S248. The active-site Schiff-base intermediate with substrate; via pyruvic acid; for decarboxylase activity is S248. S248 bears the Pyruvic acid (Ser); by autocatalysis mark.

It belongs to the phosphatidylserine decarboxylase family. PSD-B subfamily. Prokaryotic type I sub-subfamily. As to quaternary structure, heterodimer of a large membrane-associated beta subunit and a small pyruvoyl-containing alpha subunit. It depends on pyruvate as a cofactor. In terms of processing, is synthesized initially as an inactive proenzyme. Formation of the active enzyme involves a self-maturation process in which the active site pyruvoyl group is generated from an internal serine residue via an autocatalytic post-translational modification. Two non-identical subunits are generated from the proenzyme in this reaction, and the pyruvate is formed at the N-terminus of the alpha chain, which is derived from the carboxyl end of the proenzyme. The autoendoproteolytic cleavage occurs by a canonical serine protease mechanism, in which the side chain hydroxyl group of the serine supplies its oxygen atom to form the C-terminus of the beta chain, while the remainder of the serine residue undergoes an oxidative deamination to produce ammonia and the pyruvoyl prosthetic group on the alpha chain. During this reaction, the Ser that is part of the protease active site of the proenzyme becomes the pyruvoyl prosthetic group, which constitutes an essential element of the active site of the mature decarboxylase.

Its subcellular location is the cell membrane. The enzyme catalyses a 1,2-diacyl-sn-glycero-3-phospho-L-serine + H(+) = a 1,2-diacyl-sn-glycero-3-phosphoethanolamine + CO2. The protein operates within phospholipid metabolism; phosphatidylethanolamine biosynthesis; phosphatidylethanolamine from CDP-diacylglycerol: step 2/2. In terms of biological role, catalyzes the formation of phosphatidylethanolamine (PtdEtn) from phosphatidylserine (PtdSer). The polypeptide is Phosphatidylserine decarboxylase proenzyme (Acidovorax ebreus (strain TPSY) (Diaphorobacter sp. (strain TPSY))).